Here is a 354-residue protein sequence, read N- to C-terminus: Protein-arginine kinase (354 aa).

The 231-residue stretch at 24–254 folds into the Phosphagen kinase C-terminal domain; that stretch reads IVLSSRIRLA…QQIIQQEKMA (231 aa). Residues 27-31, H92, R125, 176-180, and 207-212 contribute to the ATP site; these read SSRIR, RASVM, and RGIYGE. The RDXXRA motif of the pArg binding pocket involved in allosteric regulation signature appears at 337–342; the sequence is RDYRRA.

Belongs to the ATP:guanido phosphotransferase family.

It carries out the reaction L-arginyl-[protein] + ATP = N(omega)-phospho-L-arginyl-[protein] + ADP + H(+). Appears to be allosterically activated by the binding of pArg-containing polypeptides to the pArg-binding pocket localized in the C-terminal domain of McsB. Its function is as follows. Catalyzes the specific phosphorylation of arginine residues in a large number of proteins. Is part of the bacterial stress response system. Protein arginine phosphorylation has a physiologically important role and is involved in the regulation of many critical cellular processes, such as protein homeostasis, motility, competence, and stringent and stress responses, by regulating gene expression and protein activity. The protein is Protein-arginine kinase of Bacillus cereus (strain AH187).